Reading from the N-terminus, the 158-residue chain is MSHGKRTDMLPEIAAAVGFLTSLLRTRGCVSEQRLKVFSRALQDALTDHYKHHWFPEKPSKGSGYRCIRINHKMDPIISKVASQIGLSQPQLHQLLPSELTLWVDPYEVSYRIGEDGSICVLYEEAPVATSYGLLTCKNQMMLGRSSPSKNYVMTVSS.

At serine 147 the chain carries Phosphoserine; by MAPK1 and MAPK3. Phosphoserine; by MAPK14 is present on serine 149.

Belongs to the BTG family. Interacts with PRKCABP. Interacts with CNOT7 and CNOT8; indicative for an association with the CCR4-NOT complex. Interacts with PIN1, inducing mitochondrial depolarization. In terms of processing, phosphorylated at Ser-147 by MAPK1/ERK2 and MAPK3/ERK1, and at Ser-149 by MAPK14, leading to PIN1-binding and mitochondrial depolarization. In brain at embryonic day 13.5, placenta, amnion, and spleen, which are proliferating and/or differentiating.

Its function is as follows. Anti-proliferative protein; the function is mediated by association with deadenylase subunits of the CCR4-NOT complex. Activates mRNA deadenylation in a CNOT6 and CNOT7-dependent manner. In vitro can inhibit deadenylase activity of CNOT7 and CNOT8. Involved in cell cycle regulation. Could be involved in the growth arrest and differentiation of the neuronal precursors. Modulates transcription regulation mediated by ESR1. Involved in mitochondrial depolarization and neurite outgrowth. The polypeptide is Protein BTG2 (Btg2) (Rattus norvegicus (Rat)).